The following is a 281-amino-acid chain: Small ribosomal subunit protein uS2 (281 aa).

This sequence belongs to the universal ribosomal protein uS2 family.

The chain is Small ribosomal subunit protein uS2 (rpsB) from Chlamydia muridarum (strain MoPn / Nigg).